Here is a 150-residue protein sequence, read N- to C-terminus: Flagellar assembly factor FliW (150 aa).

It belongs to the FliW family. As to quaternary structure, interacts with translational regulator CsrA. Interacts with flagellins FlaB1, FlaB2 and FlaB3.

Its subcellular location is the cytoplasm. Acts as an anti-CsrA protein, binds CsrA and prevents it from repressing translation of its target genes, one of which is flagellin. Binds to flagellin and participates in the assembly of the flagellum. Its function is as follows. Binds to the C-terminal region of flagellin, which is implicated in polymerization, and participates in the assembly of the flagellum. In Treponema pallidum (strain Nichols), this protein is Flagellar assembly factor FliW.